The sequence spans 252 residues: Triosephosphate isomerase (252 aa).

A substrate-binding site is contributed by 10-12 (NWK). His-96 serves as the catalytic Electrophile. The Proton acceptor role is filled by Glu-168. Residues Gly-174, Ser-214, and 235-236 (GG) contribute to the substrate site.

Belongs to the triosephosphate isomerase family. Homodimer.

The protein localises to the cytoplasm. The enzyme catalyses D-glyceraldehyde 3-phosphate = dihydroxyacetone phosphate. Its pathway is carbohydrate biosynthesis; gluconeogenesis. It participates in carbohydrate degradation; glycolysis; D-glyceraldehyde 3-phosphate from glycerone phosphate: step 1/1. In terms of biological role, involved in the gluconeogenesis. Catalyzes stereospecifically the conversion of dihydroxyacetone phosphate (DHAP) to D-glyceraldehyde-3-phosphate (G3P). The protein is Triosephosphate isomerase of Streptococcus pyogenes serotype M1.